The primary structure comprises 116 residues: Large ribosomal subunit protein bL17 (116 aa).

The protein belongs to the bacterial ribosomal protein bL17 family. Part of the 50S ribosomal subunit. Contacts protein L32.

The polypeptide is Large ribosomal subunit protein bL17 (Gloeothece citriformis (strain PCC 7424) (Cyanothece sp. (strain PCC 7424))).